The primary structure comprises 289 residues: ATP synthase gamma chain (289 aa).

Belongs to the ATPase gamma chain family. In terms of assembly, F-type ATPases have 2 components, CF(1) - the catalytic core - and CF(0) - the membrane proton channel. CF(1) has five subunits: alpha(3), beta(3), gamma(1), delta(1), epsilon(1). CF(0) has three main subunits: a, b and c.

It is found in the cell inner membrane. Produces ATP from ADP in the presence of a proton gradient across the membrane. The gamma chain is believed to be important in regulating ATPase activity and the flow of protons through the CF(0) complex. This is ATP synthase gamma chain from Haemophilus influenzae (strain 86-028NP).